We begin with the raw amino-acid sequence, 549 residues long: Leucine-rich repeat, immunoglobulin-like domain and transmembrane domain-containing protein 2 (549 aa).

The first 22 residues, 1–22, serve as a signal peptide directing secretion; sequence MAFVFYCFLQVLVSWVIHAVQP. The LRRNT domain occupies 23-54; sequence FCLPECTCSEESFGRSLQCMSMSLGKIPDNFP. 4 LRR repeats span residues 80 to 103, 104 to 125, 128 to 149, and 152 to 173; these read SLEY…EDLP, ELRE…AFRA, LLRV…ALQF, and NLIY…VFLN. N90 carries N-linked (GlcNAc...) asparagine glycosylation. Residues 200-252 enclose the LRRCT domain; that stretch reads NPWLCDCRLRGLAQFVKSVGPPFILVNSYLVCQGPVSKAGQLLHETELGVCMK. Residues 253 to 339 enclose the Ig-like domain; it reads PTISTPSVNV…FNSIGRSSLV (87 aa). N-linked (GlcNAc...) asparagine glycosylation occurs at N261. C274 and C327 are disulfide-bonded. In terms of domain architecture, Fibronectin type-III spans 361 to 447; it reads EVSAYVDLRV…QPPSQGQCVV (87 aa). Residues 463–483 form a helical membrane-spanning segment; that stretch reads LLHVTVVLCAVLLALPVGAYV. N491 carries N-linked (GlcNAc...) asparagine glycosylation. The segment at 521-549 is disordered; the sequence is FKDPSGVYEDGESHRVMEEDEEVEKEGIS. Positions 538 to 549 are enriched in acidic residues; the sequence is EEDEEVEKEGIS.

In terms of assembly, interacts with LRIT1; may form a heterodimer with LRIT1.

Its subcellular location is the membrane. This is Leucine-rich repeat, immunoglobulin-like domain and transmembrane domain-containing protein 2 (Lrit2) from Mus musculus (Mouse).